The primary structure comprises 345 residues: Phenylalanine--tRNA ligase alpha subunit (345 aa).

Residue Glu266 participates in Mg(2+) binding.

The protein belongs to the class-II aminoacyl-tRNA synthetase family. Phe-tRNA synthetase alpha subunit type 1 subfamily. As to quaternary structure, tetramer of two alpha and two beta subunits. Mg(2+) serves as cofactor.

It is found in the cytoplasm. The catalysed reaction is tRNA(Phe) + L-phenylalanine + ATP = L-phenylalanyl-tRNA(Phe) + AMP + diphosphate + H(+). The polypeptide is Phenylalanine--tRNA ligase alpha subunit (Methylibium petroleiphilum (strain ATCC BAA-1232 / LMG 22953 / PM1)).